The sequence spans 699 residues: SHC SH2 domain-binding protein 1 homolog A (699 aa).

PbH1 repeat units lie at residues Ser480–Pro502, Gly503–Asp524, and Ile532–Lys554. Positions Ala603 to Glu627 form a coiled coil.

Its subcellular location is the midbody. It localises to the cytoplasm. The protein localises to the cytoskeleton. It is found in the spindle. Its function is as follows. May play a role in signaling pathways governing cellular proliferation. In Xenopus laevis (African clawed frog), this protein is SHC SH2 domain-binding protein 1 homolog A (shcbp1-a).